The sequence spans 251 residues: Ribosomal RNA small subunit methyltransferase J (251 aa).

S-adenosyl-L-methionine contacts are provided by residues 100–101 (RD), 116–117 (ER), and aspartate 170.

The protein belongs to the methyltransferase superfamily. RsmJ family.

The protein localises to the cytoplasm. The enzyme catalyses guanosine(1516) in 16S rRNA + S-adenosyl-L-methionine = N(2)-methylguanosine(1516) in 16S rRNA + S-adenosyl-L-homocysteine + H(+). Its function is as follows. Specifically methylates the guanosine in position 1516 of 16S rRNA. The chain is Ribosomal RNA small subunit methyltransferase J from Actinobacillus pleuropneumoniae serotype 3 (strain JL03).